The following is a 207-amino-acid chain: Proteasome subunit beta 2 (207 aa).

Positions 1 to 13 (METNNKLKILKTG) are cleaved as a propeptide — removed in mature form; by autocatalysis. Catalysis depends on Thr14, which acts as the Nucleophile.

The protein belongs to the peptidase T1B family. As to quaternary structure, the 20S proteasome core is composed of 14 alpha and 14 beta subunits that assemble into four stacked heptameric rings, resulting in a barrel-shaped structure. The two inner rings, each composed of seven catalytic beta subunits, are sandwiched by two outer rings, each composed of seven alpha subunits. The catalytic chamber with the active sites is on the inside of the barrel. Has a gated structure, the ends of the cylinder being occluded by the N-termini of the alpha-subunits. Is capped at one or both ends by the proteasome regulatory ATPase, PAN.

The protein resides in the cytoplasm. The catalysed reaction is Cleavage of peptide bonds with very broad specificity.. The formation of the proteasomal ATPase PAN-20S proteasome complex, via the docking of the C-termini of PAN into the intersubunit pockets in the alpha-rings, triggers opening of the gate for substrate entry. Interconversion between the open-gate and close-gate conformations leads to a dynamic regulation of the 20S proteasome proteolysis activity. Its function is as follows. Component of the proteasome core, a large protease complex with broad specificity involved in protein degradation. This chain is Proteasome subunit beta 2, found in Sulfurisphaera tokodaii (strain DSM 16993 / JCM 10545 / NBRC 100140 / 7) (Sulfolobus tokodaii).